Here is a 284-residue protein sequence, read N- to C-terminus: Tegument protein VP22 (284 aa).

Disordered stretches follow at residues 1-126 (MSYY…WSID) and 239-284 (LYAS…SRRR). Basic and acidic residues predominate over residues 74 to 83 (SRDDDDRRQP). The segment covering 94 to 108 (ERRKSQTTVTTRRKT) has biased composition (basic residues). The segment covering 115–126 (KSSNSNGPWSID) has biased composition (polar residues).

The protein belongs to the alphaherpesvirinae VP22 tegument protein family. In terms of assembly, interacts with gE (via C-terminus); this interaction is necessary for the recruitment of VP22 to the Golgi and its packaging into virions. Interacts with gM (via C-terminus). Interacts with VP16; this interaction allows the formation of a tripartite complex composed of VP16, VP22 and UL41/VHS. Interacts with the capsid-binding protein UL16. Interacts with host CGAS. In terms of processing, highly phosphorylated in the host cell. Packaging is selective for underphosphorylated forms.

It localises to the virion tegument. Its subcellular location is the host cytoplasm. It is found in the host nucleus. The protein localises to the host Golgi apparatus. Tegument protein that plays different roles during the time course of infection. Participates in both the accumulation of viral mRNAs and viral protein translation at late time of infection. Modulates the RNase activity of the virion host shutoff protein UL41 probably to ensure necessary levels of key cellular mRNAs and proteins. Plays a role in microtubule reorganization that occurs after viral infection by stabilizing microtubule network. Plays a role in the inhibition of host innate immune system by targeting the CGAS enzymatic activity which is the principal cytosolic DNA sensor that detects invading viral DNA. Acts by mediating disruption of liquid-like droplets in which CGAS is activated, thereby preventing CGAS activity. The polypeptide is Tegument protein VP22 (UL49) (Amazona oratrix (yellow-headed parrot)).